Consider the following 387-residue polypeptide: Succinate--CoA ligase [ADP-forming] subunit beta (387 aa).

Residues K46, 53-55 (GRG), E99, C102, and E107 contribute to the ATP site. N196 and D210 together coordinate Mg(2+). Residues N261 and 318–320 (GIV) each bind substrate.

The protein belongs to the succinate/malate CoA ligase beta subunit family. Heterotetramer of two alpha and two beta subunits. Mg(2+) serves as cofactor.

It carries out the reaction succinate + ATP + CoA = succinyl-CoA + ADP + phosphate. The enzyme catalyses GTP + succinate + CoA = succinyl-CoA + GDP + phosphate. It participates in carbohydrate metabolism; tricarboxylic acid cycle; succinate from succinyl-CoA (ligase route): step 1/1. Its function is as follows. Succinyl-CoA synthetase functions in the citric acid cycle (TCA), coupling the hydrolysis of succinyl-CoA to the synthesis of either ATP or GTP and thus represents the only step of substrate-level phosphorylation in the TCA. The beta subunit provides nucleotide specificity of the enzyme and binds the substrate succinate, while the binding sites for coenzyme A and phosphate are found in the alpha subunit. The sequence is that of Succinate--CoA ligase [ADP-forming] subunit beta from Campylobacter hominis (strain ATCC BAA-381 / DSM 21671 / CCUG 45161 / LMG 19568 / NCTC 13146 / CH001A).